The chain runs to 394 residues: Mitogen-activated protein kinase 2 (394 aa).

The span at 1–31 shows a compositional bias: gly residues; it reads MRMEGGGGGGHGHHGGGGGGHGHHGGIGGGE. Residues 1 to 33 are disordered; that stretch reads MRMEGGGGGGHGHHGGGGGGHGHHGGIGGGEAQ. Positions 61 to 347 constitute a Protein kinase domain; it reads VPPIRPVGRG…VDEALCHPYL (287 aa). ATP contacts are provided by residues 67 to 75 and Lys90; that span reads VGRGACGII. Catalysis depends on Asp187, which acts as the Proton acceptor. Tyr221 carries the post-translational modification Phosphotyrosine.

It belongs to the protein kinase superfamily. CMGC Ser/Thr protein kinase family. MAP kinase subfamily. Post-translationally, the phosphorylation on Tyr-221 activates the enzyme. A conserved Thr, which must also be phosphorylated to activate the enzyme in closely related sequences, is replaced by Met-219 in this sequence.

It catalyses the reaction L-seryl-[protein] + ATP = O-phospho-L-seryl-[protein] + ADP + H(+). The catalysed reaction is L-threonyl-[protein] + ATP = O-phospho-L-threonyl-[protein] + ADP + H(+). The chain is Mitogen-activated protein kinase 2 (MPK2) from Oryza sativa subsp. japonica (Rice).